The primary structure comprises 231 residues: Ribose-5-phosphate isomerase A (231 aa).

Substrate-binding positions include 40-43, 93-96, and 106-109; these read TGST, DGAD, and KGGG. The active-site Proton acceptor is Glu-115. Lys-133 provides a ligand contact to substrate.

The protein belongs to the ribose 5-phosphate isomerase family. As to quaternary structure, homodimer.

The enzyme catalyses aldehydo-D-ribose 5-phosphate = D-ribulose 5-phosphate. It functions in the pathway carbohydrate degradation; pentose phosphate pathway; D-ribose 5-phosphate from D-ribulose 5-phosphate (non-oxidative stage): step 1/1. Its function is as follows. Catalyzes the reversible conversion of ribose-5-phosphate to ribulose 5-phosphate. The polypeptide is Ribose-5-phosphate isomerase A (Escherichia coli O6:K15:H31 (strain 536 / UPEC)).